The following is a 343-amino-acid chain: Plasminogen (343 aa).

Kringle domains lie at 1-17 (APQA…DCML) and 41-120 (AQEP…GCVA). The plasmin heavy chain A stretch occupies residues 1–140 (APQAPSVENP…LRRRSREHFC (140 aa)). 3 disulfide bridges follow: cysteine 15–cysteine 94, cysteine 36–cysteine 77, and cysteine 65–cysteine 89. The Peptidase S1 domain maps to 114 to 341 (VVGGCVATPH…YVPWIEETMR (228 aa)). At serine 130 the chain carries Phosphoserine. Residues cysteine 140 and cysteine 156 are joined by a disulfide bond. The segment at 141–343 (GGTLISPEWV…PWIEETMRRY (203 aa)) is plasmin light chain B. Catalysis depends on charge relay system residues histidine 155 and aspartate 198. Serine 221 carries the post-translational modification Phosphoserine. 3 disulfide bridges follow: cysteine 232/cysteine 299, cysteine 262/cysteine 278, and cysteine 289/cysteine 317. The active-site Charge relay system is the serine 293.

This sequence belongs to the peptidase S1 family. Plasminogen subfamily. Interacts with CSPG4 and AMOT. Interacts (via the Kringle domains) with HRG; the interaction tethers PLG to the cell surface and enhances its activation. Interacts (via Kringle 4 domain) with ADA; the interaction stimulates PLG activation when in complex with DPP4. Angiostatin: Interacts with ATP5F1A; the interaction inhibits most of the angiogenic effects of angiostatin.

The protein resides in the secreted. The catalysed reaction is Preferential cleavage: Lys-|-Xaa &gt; Arg-|-Xaa, higher selectivity than trypsin. Converts fibrin into soluble products.. Converted into plasmin by plasminogen activators, both plasminogen and its activator being bound to fibrin. Cannot be activated with streptokinase. In terms of biological role, plasmin dissolves the fibrin of blood clots and acts as a proteolytic factor in a variety of other processes including embryonic development, tissue remodeling, tumor invasion, and inflammation. In ovulation, weakens the walls of the Graafian follicle. It activates the urokinase-type plasminogen activator, collagenases and several complement zymogens, such as C1, C4 and C5. Cleavage of fibronectin and laminin leads to cell detachment and apoptosis. Also cleaves fibrin, thrombospondin and von Willebrand factor. Its role in tissue remodeling and tumor invasion may be modulated by CSPG4. Binds to cells. The protein is Plasminogen (PLG) of Ovis aries (Sheep).